The sequence spans 1543 residues: ATP-binding cassette sub-family C member 2 (1543 aa).

The Extracellular segment spans residues 1 to 26; that stretch reads MDEFCNSTFWNLSLLKSPEADLPLCF. Residues N6 and N11 are each glycosylated (N-linked (GlcNAc...) asparagine). The helical transmembrane segment at 27 to 47 threads the bilayer; that stretch reads EQTVLVWIPLGFLWLLAPWQL. Topologically, residues 48–67 are cytoplasmic; it reads YRIYRSRTKRFAITKFYLAK. The chain crosses the membrane as a helical span at residues 68 to 88; sequence QVFVVCLLILAAIDLSLALTE. At 89-92 the chain is on the extracellular side; that stretch reads DTGQ. Residues 93 to 113 form a helical membrane-spanning segment; sequence ATIPPVKYTNPILYLCTWLLV. Over 114-125 the chain is Cytoplasmic; sequence LVIQHCRQCCIQ. The helical transmembrane segment at 126 to 146 threads the bilayer; that stretch reads KNSWFLSMFWILSLLCGIFQF. The Extracellular portion of the chain corresponds to 147–164; it reads QTLIRALLQDSKSNMTYS. An N-linked (GlcNAc...) asparagine glycan is attached at N160. A helical membrane pass occupies residues 165-185; sequence CLFFVSYGFQIVILILSAFSE. At 186–311 the chain is on the cytoplasmic side; sequence SSDSTHAPSA…DFPKSWLVKA (126 aa). The disordered stretch occupies residues 260–285; it reads LKKSQQSPEGTSHGLTKKQSQSQDVL. Over residues 263–283 the composition is skewed to polar residues; that stretch reads SQQSPEGTSHGLTKKQSQSQD. Phosphoserine occurs at positions 279 and 281. The chain crosses the membrane as a helical span at residues 312 to 332; sequence LFKTFYVVILKSFILKLAHDI. The ABC transmembrane type-1 1 domain maps to 320–603; sequence ILKSFILKLA…LPMVISSVIQ (284 aa). At 333-358 the chain is on the extracellular side; the sequence is LLFLNPQLLKFLIGFVKDPDSYPWVG. Residues 359–379 traverse the membrane as a helical segment; sequence YIYAILMFSVTLIQSFFLQCY. The Cytoplasmic segment spans residues 380–435; it reads FQFCFVLGMTVRTTIIASVYKKALTLSNLARRQYTIGETVNLMSVDSQKLMDVTNY. Residues 436-456 traverse the membrane as a helical segment; sequence IHLLWSSVLQIALSIFFLWRE. Over 457–459 the chain is Extracellular; it reads LGP. Residues 460 to 480 traverse the membrane as a helical segment; the sequence is SILAGVGLMVLLVPVNGVLAT. Residues 481–542 are Cytoplasmic-facing; the sequence is KIRKIQVQNM…NLLRFSQLQT (62 aa). Residues 543–563 form a helical membrane-spanning segment; the sequence is ILIFILHLTPTLVSVITFSVY. The Extracellular portion of the chain corresponds to 564-585; sequence VLVDSQNVLNAEKAFTSITLFN. A helical transmembrane segment spans residues 586-606; sequence ILRFPLAMLPMVISSVIQASV. The Cytoplasmic portion of the chain corresponds to 607–969; it reads SVDRLEQYLG…VKFSIYLKYL (363 aa). The 225-residue stretch at 635–859 folds into the ABC transporter 1 domain; it reads VQFSEASFTW…KGVFAKNWKT (225 aa). 669–676 contacts ATP; it reads GTVGSGKS. S876 bears the Phosphoserine mark. Residues 903–927 are disordered; the sequence is RENSLRRTLSRSSRSGSRRGKSLKS. Residues 908–917 are compositionally biased toward low complexity; the sequence is RRTLSRSSRS. Residues S924 and S928 each carry the phosphoserine modification. Residues 970 to 990 form a helical membrane-spanning segment; it reads QAVGWWSLLFIVIFYVLNYVA. The region spanning 977-1262 is the ABC transmembrane type-1 2 domain; sequence LLFIVIFYVL…LVRMTSEVET (286 aa). The Extracellular portion of the chain corresponds to 991 to 1031; that stretch reads FIGTNLWLSAWTSDSEKQNGTDNSPSQRDMRIGVFGALGIA. N1009 carries N-linked (GlcNAc...) asparagine glycosylation. The chain crosses the membrane as a helical span at residues 1032 to 1052; sequence QGIFLLSSSLWSIYACRNASK. Over 1053 to 1095 the chain is Cytoplasmic; that stretch reads TLHRQLLTNILRAPMSFFDTTPTGRIVNRFAGDISTVDDTLPQ. A helical membrane pass occupies residues 1096 to 1116; it reads TLRSWLLCFFGIVSTLVMICM. Position 1117 (A1117) is a topological domain, extracellular. Residues 1118 to 1138 traverse the membrane as a helical segment; it reads TPIFIIIIIPLSILYVSVQVF. Topologically, residues 1139–1209 are cytoplasmic; that stretch reads YVATSRQLRR…TSNRWLAIRL (71 aa). The chain crosses the membrane as a helical span at residues 1210–1230; that stretch reads ELVGNLIVFCSALLLVIYKNS. The Extracellular portion of the chain corresponds to 1231 to 1232; sequence LT. Residues 1233-1253 traverse the membrane as a helical segment; it reads GDTVGFVLSNALNITQTLNWL. Residues 1254–1543 are Cytoplasmic-facing; it reads VRMTSEVETN…GIESVNHTEL (290 aa). The ABC transporter 2 domain occupies 1298-1532; sequence IQFNNYQVRY…MGPFYLMAKE (235 aa). Residue 1332–1339 coordinates ATP; that stretch reads GRTGAGKS. At S1436 the chain carries Phosphoserine.

It belongs to the ABC transporter superfamily. ABCC family. Conjugate transporter (TC 3.A.1.208) subfamily. As to expression, expressed in liver.

The protein resides in the apical cell membrane. The catalysed reaction is an S-substituted glutathione(in) + ATP + H2O = an S-substituted glutathione(out) + ADP + phosphate + H(+). The enzyme catalyses taurolithocholate 3-sulfate(in) + ATP + H2O = taurolithocholate 3-sulfate(out) + ADP + phosphate + H(+). It catalyses the reaction ATP + H2O + xenobioticSide 1 = ADP + phosphate + xenobioticSide 2.. It carries out the reaction leukotriene C4(in) + ATP + H2O = leukotriene C4(out) + ADP + phosphate + H(+). The catalysed reaction is 17beta-estradiol 17-O-(beta-D-glucuronate)(in) + ATP + H2O = 17beta-estradiol 17-O-(beta-D-glucuronate)(out) + ADP + phosphate + H(+). The enzyme catalyses (4Z,15Z)-bilirubin IXalpha C8-beta-D-glucuronoside(in) + ATP + H2O = (4Z,15Z)-bilirubin IXalpha C8-beta-D-glucuronoside(out) + ADP + phosphate + H(+). It catalyses the reaction (4Z,15Z)-bilirubin IXalpha C8,C12-beta-D-bisglucuronoside(in) + ATP + H2O = (4Z,15Z)-bilirubin IXalpha C8,C12-beta-D-bisglucuronoside(out) + ADP + phosphate + H(+). Its function is as follows. ATP-dependent transporter of the ATP-binding cassette (ABC) family that binds and hydrolyzes ATP to enable active transport of various substrates including many drugs, toxicants and endogenous compound across cell membranes. Transports a wide variety of conjugated organic anions such as sulfate-, glucuronide- and glutathione (GSH)-conjugates of endo- and xenobiotics substrates. Mediates hepatobiliary excretion of mono- and bis-glucuronidated bilirubin molecules and therefore play an important role in bilirubin detoxification. Mediates also hepatobiliary excretion of others glucuronide conjugates such as 17beta-estradiol 17-glucosiduronic acid and leukotriene C4. Transports sulfated bile salt such as taurolithocholate sulfate. Transports various anticancer drugs, such as anthracycline, vinca alkaloid and methotrexate and HIV-drugs such as protease inhibitors. The protein is ATP-binding cassette sub-family C member 2 of Mus musculus (Mouse).